The chain runs to 101 residues: Large ribosomal subunit protein bL28 (101 aa).

This sequence belongs to the bacterial ribosomal protein bL28 family.

This chain is Large ribosomal subunit protein bL28, found in Rhodopseudomonas palustris (strain ATCC BAA-98 / CGA009).